The chain runs to 317 residues: Acetyl-coenzyme A carboxylase carboxyl transferase subunit alpha (317 aa).

The CoA carboxyltransferase C-terminal domain occupies 40-293 (LEVRVREAIV…GDVIASALAE (254 aa)).

This sequence belongs to the AccA family. Acetyl-CoA carboxylase is a heterohexamer composed of biotin carboxyl carrier protein (AccB), biotin carboxylase (AccC) and two subunits each of ACCase subunit alpha (AccA) and ACCase subunit beta (AccD).

The protein resides in the cytoplasm. The catalysed reaction is N(6)-carboxybiotinyl-L-lysyl-[protein] + acetyl-CoA = N(6)-biotinyl-L-lysyl-[protein] + malonyl-CoA. It functions in the pathway lipid metabolism; malonyl-CoA biosynthesis; malonyl-CoA from acetyl-CoA: step 1/1. In terms of biological role, component of the acetyl coenzyme A carboxylase (ACC) complex. First, biotin carboxylase catalyzes the carboxylation of biotin on its carrier protein (BCCP) and then the CO(2) group is transferred by the carboxyltransferase to acetyl-CoA to form malonyl-CoA. The polypeptide is Acetyl-coenzyme A carboxylase carboxyl transferase subunit alpha (Rhizobium johnstonii (strain DSM 114642 / LMG 32736 / 3841) (Rhizobium leguminosarum bv. viciae)).